A 267-amino-acid chain; its full sequence is Hydroxynaphthalene reductase-like protein Arp2 (267 aa).

NADP(+) contacts are provided by Ile-25, Asn-45, Asp-71, and Asn-98. Catalysis depends on proton donor residues Ser-147 and Ser-148. Tyr-162, Lys-166, Val-195, and Thr-197 together coordinate NADP(+). Tyr-162 functions as the Proton acceptor in the catalytic mechanism. The active-site Lowers pKa of active site Tyr is Lys-166.

It belongs to the short-chain dehydrogenases/reductases (SDR) family.

Functionally, hydroxynaphthalene reductase-like protein; part of the Pks2 gene cluster that mediates the formation of infectious structures (appressoria), enabling these fungi to kill insects faster. The product of the Pks2 gene cluster is different from the one of Pks1 and has still not been identified. This Metarhizium guizhouense (strain ARSEF 977) protein is Hydroxynaphthalene reductase-like protein Arp2.